A 181-amino-acid chain; its full sequence is DKIPDFVVPGKCASVDRNKLWAEQTPNRNSYAGVWYQFALTNNPYQLIEKCVRNEYSFDGKQFVIKSTGIAYDGNLLKRNGKLYPNPFGEPHLSIDYENSFAAPLVILETDYSNYACLYSCIDYNFGYHSDFSFIFSRSANLADQYVKKCEAAFKNINVDTTRFVKTVQGSSCPYDTQKTL.

Intrachain disulfides connect Cys-12–Cys-121, Cys-51–Cys-173, and Cys-117–Cys-150.

The protein belongs to the calycin superfamily. Lipocalin family. Oligomer; Can form dimers (beta-crustacyanin); or complexes of 16 subunits (alpha-crustacyanin). There are five types of subunits: A1, A2, A3, C1 and C2. Found in the carapace.

The protein resides in the secreted. Its subcellular location is the extracellular space. Functionally, binds the carotenoid astaxanthin (AXT) which provides the blue coloration to the carapace of the lobster. In Homarus gammarus (European lobster), this protein is Crustacyanin-C1 subunit.